A 1923-amino-acid chain; its full sequence is Nuclear pore complex protein GP210 (1923 aa).

The N-terminal stretch at 1-22 (MVPVSFCFFFLLLLLSAGESSS) is a signal peptide. Residues Asn73, Asn117, Asn289, Asn609, Asn863, Asn903, Asn967, Asn982, Asn1171, Asn1199, Asn1550, Asn1568, and Asn1743 are each glycosylated (N-linked (GlcNAc...) asparagine). The region spanning 1152 to 1205 (IFLVPGASYVLTIEGGPTMNVSVDYTTVDNEVAKIEKSGRLYATSPGNTTIYAT) is the BIG2 domain. The helical transmembrane segment at 1829–1849 (SVLLKILWGVLVLVVSVIILM) threads the bilayer.

The protein belongs to the NUP210 family. Part of the nuclear pore complex (NPC). The NPC has an eight-fold symmetrical structure comprising a central transport channel and two rings, the cytoplasmic and nuclear rings, to which eight filaments are attached. The cytoplasmic filaments have loose ends, while the nuclear filaments are joined in a distal ring, forming a nuclear basket. NPCs are highly dynamic in configuration and composition, and can be devided in 3 subcomplexes, the NUP62 subcomplex, the NUP107-160 subcomplex and the NUP93 subcomplex, containing approximately 30 different nucleoporin proteins.

Its subcellular location is the nucleus envelope. It localises to the nucleus membrane. The protein localises to the nucleus. It is found in the nuclear pore complex. This is Nuclear pore complex protein GP210 from Arabidopsis thaliana (Mouse-ear cress).